The following is a 345-amino-acid chain: Methionine import ATP-binding protein MetN 2 (345 aa).

The region spanning 4-243 is the ABC transporter domain; sequence IELRHVKKEF…PQTEIAKRFI (240 aa). 40–47 contacts ATP; sequence GYSGAGKS.

It belongs to the ABC transporter superfamily. Methionine importer (TC 3.A.1.24) family. In terms of assembly, the complex is composed of two ATP-binding proteins (MetN), two transmembrane proteins (MetI) and a solute-binding protein (MetQ).

It localises to the cell membrane. The catalysed reaction is L-methionine(out) + ATP + H2O = L-methionine(in) + ADP + phosphate + H(+). It catalyses the reaction D-methionine(out) + ATP + H2O = D-methionine(in) + ADP + phosphate + H(+). Part of the ABC transporter complex MetNIQ involved in methionine import. Responsible for energy coupling to the transport system. In Enterococcus faecalis (strain ATCC 700802 / V583), this protein is Methionine import ATP-binding protein MetN 2.